Reading from the N-terminus, the 84-residue chain is Large ribosomal subunit protein bL27 (84 aa).

Residues 1–24 (MAHKKAGGSSRNGRDSKGQRLGCK) are disordered.

It belongs to the bacterial ribosomal protein bL27 family.

The chain is Large ribosomal subunit protein bL27 from Pelobacter propionicus (strain DSM 2379 / NBRC 103807 / OttBd1).